The following is a 1374-amino-acid chain: DNA-directed RNA polymerase subunit beta (1374 aa).

The protein belongs to the RNA polymerase beta chain family. The RNAP catalytic core consists of 2 alpha, 1 beta, 1 beta' and 1 omega subunit. When a sigma factor is associated with the core the holoenzyme is formed, which can initiate transcription.

It carries out the reaction RNA(n) + a ribonucleoside 5'-triphosphate = RNA(n+1) + diphosphate. In terms of biological role, DNA-dependent RNA polymerase catalyzes the transcription of DNA into RNA using the four ribonucleoside triphosphates as substrates. The chain is DNA-directed RNA polymerase subunit beta from Acidovorax sp. (strain JS42).